Consider the following 525-residue polypeptide: Probable feruloyl esterase B-1 (525 aa).

Residues 1-20 (MMRWFLLIGLASAAATDSSA) form the signal peptide. Disulfide bonds link Cys-26-Cys-75, Cys-61-Cys-114, Cys-187-Cys-442, Cys-256-Cys-273, Cys-282-Cys-292, and Cys-502-Cys-524. 3 N-linked (GlcNAc...) asparagine glycosylation sites follow: Asn-51, Asn-80, and Asn-98. Residue Ser-188 is the Acyl-ester intermediate of the active site. Ca(2+) is bound by residues Asp-257, Asp-260, Ala-262, and Asp-264. Asn-283, Asn-288, and Asn-351 each carry an N-linked (GlcNAc...) asparagine glycan. Active-site charge relay system residues include Asp-401 and His-441.

This sequence belongs to the tannase family.

It localises to the secreted. It catalyses the reaction feruloyl-polysaccharide + H2O = ferulate + polysaccharide.. Functionally, involved in degradation of plant cell walls. Hydrolyzes the feruloyl-arabinose ester bond in arabinoxylans as well as the feruloyl-galactose and feruloyl-arabinose ester bonds in pectin. This is Probable feruloyl esterase B-1 (faeB-1) from Neosartorya fischeri (strain ATCC 1020 / DSM 3700 / CBS 544.65 / FGSC A1164 / JCM 1740 / NRRL 181 / WB 181) (Aspergillus fischerianus).